Reading from the N-terminus, the 835-residue chain is Lon protease (835 aa).

The region spanning 36-234 is the Lon N-terminal domain; the sequence is VHVFPLLRRP…KALILLKKEL (199 aa). 387–394 contacts ATP; that stretch reads GPPGVGKT. A Lon proteolytic domain is found at 646–828; it reads RTPVGVCMGL…DQVFKISFPN (183 aa). Active-site residues include serine 734 and lysine 777.

It belongs to the peptidase S16 family. In terms of assembly, homohexamer. Organized in a ring with a central cavity.

It is found in the cytoplasm. The enzyme catalyses Hydrolysis of proteins in presence of ATP.. ATP-dependent serine protease that mediates the selective degradation of mutant and abnormal proteins as well as certain short-lived regulatory proteins. Required for cellular homeostasis and for survival from DNA damage and developmental changes induced by stress. Degrades polypeptides processively to yield small peptide fragments that are 5 to 10 amino acids long. Binds to DNA in a double-stranded, site-specific manner. The protein is Lon protease of Protochlamydia amoebophila (strain UWE25).